The primary structure comprises 1447 residues: Adhesion G protein-coupled receptor L3 (1447 aa).

A signal peptide spans 1–19 (MWPSQLLIFMMLLAPIIHA). The Extracellular segment spans residues 20 to 862 (FSRAPIPMAV…VKHSDAVHDL (843 aa)). In terms of domain architecture, SUEL-type lectin spans 35–124 (SCESYPIELR…KYLEVQYECV (90 aa)). 5 cysteine pairs are disulfide-bonded: Cys-36-Cys-66, Cys-45-Cys-123, Cys-78-Cys-110, Cys-91-Cys-97, and Cys-135-Cys-317. A glycan (N-linked (GlcNAc...) asparagine) is linked at Asn-93. One can recognise an Olfactomedin-like domain in the interval 134–393 (LCPGLLKGVY…VVKYSLDFGP (260 aa)). The segment at 249–279 (YHDTSPYRWGGKSDIDLAVDENGLWVIYATE) is interaction with FLRT3. 4 residues coordinate Ca(2+): Asp-264, Asn-312, Ala-313, and Val-367. Residues 426–473 (DISTTGPLGMGSTTTSTTLRTTTLSPGRSTTPSVSGRRNRSTSTPSPA) form a disordered region. The segment covering 428 to 458 (STTGPLGMGSTTTSTTLRTTTLSPGRSTTPS) has biased composition (low complexity). Residues Asn-464, Asn-549, Asn-746, Asn-759, Asn-804, and Asn-830 are each glycosylated (N-linked (GlcNAc...) asparagine). A GAIN-B domain is found at 675–854 (DIVRENTDNI…AVLMAHVEVK (180 aa)). Cystine bridges form between Cys-805-Cys-836 and Cys-824-Cys-838. The tract at residues 805 to 854 (CSFWSYSKRTMTGYWSTQGCRLLTTNKTHTTCSCNHLTNFAVLMAHVEVK) is GPS. Positions 842-855 (TNFAVLMAHVEVKH) are stachel. The helical transmembrane segment at 863 to 888 (LLDVITWVGILLSLVCLLICIFTFCF) threads the bilayer. Residues 889–896 (FRGLQSDR) are Cytoplasmic-facing. The chain crosses the membrane as a helical span at residues 897–918 (NTIHKNLCISLFVAELLFLIGI). The Extracellular segment spans residues 919–926 (NRTDQPIA). Residues 927–950 (CAVFAALLHFFFLAAFTWMFLEGV) form a helical membrane-spanning segment. A disulfide bond links Cys-927 and Cys-999. The Cytoplasmic segment spans residues 951-967 (QLYIMLVEVFESEHSRR). Residues 968 to 990 (KYFYLVGYGMPALIVAVSAAVDY) traverse the membrane as a helical segment. Over 991-1005 (RSYGTDKVCWLRLDT) the chain is Extracellular. The chain crosses the membrane as a helical span at residues 1006 to 1027 (YFIWSFIGPATLIIMLNVIFLG). Residues 1028-1053 (IALYKMFHHTAILKPESGCLDNIKSW) are Cytoplasmic-facing. The helical transmembrane segment at 1054–1073 (VIGAIALLCLLGLTWAFGLM) threads the bilayer. The Extracellular segment spans residues 1074-1078 (YINES). Asn-1076 is a glycosylation site (N-linked (GlcNAc...) asparagine). A helical membrane pass occupies residues 1079 to 1104 (TVIMAYLFTIFNSLQGMFIFIFHCVL). At 1105 to 1447 (QKKVRKEYGK…KGPAHLVTSL (343 aa)) the chain is on the cytoplasmic side. Residues 1123 to 1147 (GKSTESSIGSGKTSGSRTPGRYSTG) form a disordered region. Position 1164 is a phosphoserine (Ser-1164). The segment at 1423–1447 (IVPPNKDGTPPEGSSKGPAHLVTSL) is disordered. Residues 1442 to 1447 (HLVTSL) carry the PDZ-binding motif.

This sequence belongs to the G-protein coupled receptor 2 family. LN-TM7 subfamily. In terms of assembly, heterodimer of 2 chains generated by proteolytic processing; the large extracellular N-terminal fragment and the membrane-bound C-terminal fragment predominantly remain associated and non-covalently linked. Interacts (via olfactomedin-like domain) with FLRT1 (via extracellular domain). Interacts (via olfactomedin-like domain) with FLRT2 (via extracellular domain). Interacts (via olfactomedin-like domain) with FLRT3 (via extracellular domain); the interaction is direct. Interacts (via extracellular domain) with TENM1. Interacts (via extracellular domain) with TENM2. Interacts (via extracellular domain) with TENM3. Identified in a complex with FLRT3 and UNC5B; does not interact with UNC5B by itself. Identified in a complex with FLRT3 and UNC5D; does not interact with UNC5D by itself. As to quaternary structure, interacts (via PDZ-binding motif) with SHANK3. Interacts (via PDZ-binding motif) with DLG4. In terms of processing, autoproteolytically processed at the GPS region of the GAIN-B domain; this cleavage modulates receptor activity.

The protein resides in the cell membrane. It localises to the postsynaptic cell membrane. The protein localises to the cell projection. Its subcellular location is the axon. It is found in the cell junction. Its activity is regulated as follows. Forms a heterodimer of 2 chains generated by proteolytic processing that remain associated through non-covalent interactions mediated by the GAIN-B domain. In the inactivated receptor, the Stachel sequence (also named stalk) is embedded in the GAIN-B domain, where it adopts a beta-strand conformation. On activation, the Stachel moves into the 7 transmembrane region and adopts a twisted hook-shaped configuration that forms contacts within the receptor, leading to coupling of a G-alpha protein, which activates signaling. The cleaved GAIN-B and N-terminal domains can then dissociate from the rest of the receptor. In terms of biological role, orphan adhesion G-protein coupled receptor (aGPCR), which mediates synapse specificity. Ligand binding causes a conformation change that triggers signaling via guanine nucleotide-binding proteins (G proteins) and modulates the activity of downstream effectors. ADGRL3 is coupled with different classes of G alpha proteins, such as G(12)/G(13), G(s), G(i) or G(q), depending on the context. Coupling to G(12)/G(13) G proteins, which mediates the activation Rho small GTPases is the most efficient. Following G-protein coupled receptor activation, associates with cell adhesion molecules that are expressed at the surface of adjacent cells to direct synapse specificity. Specifically mediates the establishment of Schaffer-collateral synapses formed by CA3-region axons on CA1-region pyramidal neurons in the hippocampus. Localizes to postsynaptic spines in excitatory synapses in the S.oriens and S.radiatum and interacts with presynaptic cell adhesion molecules FLRT3 and TENM2, promoting synapse formation. Plays a role in the development of glutamatergic synapses in the cortex. Important in determining the connectivity rates between the principal neurons in the cortex. Orphan adhesion G-protein coupled receptor (aGPCR), which mediates synapse specificity. Ligand binding causes a conformation change that triggers signaling via guanine nucleotide-binding proteins (G proteins) and modulates the activity of downstream effectors, such as adenylate cyclase. Isoform 1 is specifically coupled to G(s) G proteins and mediates activation of adenylate cyclase activity. Following G-protein coupled receptor activation, undergoes liquid-liquid phase transition, associates with (1) cell adhesion molecules that are expressed at the surface of adjacent cells, as well as (2) PDZ-containing proteins, such as SHANK3 and DLG4, in the cytoplasm to direct synapse formation. This Homo sapiens (Human) protein is Adhesion G protein-coupled receptor L3.